An 884-amino-acid chain; its full sequence is Lon protease homolog 2, peroxisomal (884 aa).

Residues 12–255 form the Lon N-terminal domain; it reads LAILPFRNKV…KATELVDRHL (244 aa). The disordered stretch occupies residues 67–101; it reads SLLSPGVGSDSGEGGSKAPGGSAGESTKQDTKNGK. Residues 75–89 are compositionally biased toward gly residues; sequence SDSGEGGSKAPGGSA. ATP is bound at residue 408 to 415; that stretch reads GPPGVGKT. Residues 689 to 874 enclose the Lon proteolytic domain; that stretch reads VASPGVSVGL…EEVLDHAFEG (186 aa). Catalysis depends on residues Ser780 and Lys823. Residues 882 to 884 carry the Microbody targeting signal motif; that stretch reads SKL.

Belongs to the peptidase S16 family.

It localises to the peroxisome matrix. The enzyme catalyses Hydrolysis of proteins in presence of ATP.. Its function is as follows. ATP-dependent serine protease that mediates the selective degradation of misfolded and unassembled polypeptides in the peroxisomal matrix. Necessary for type 2 peroxisome targeting signal (PTS2)-containing protein processing and facilitates peroxisome matrix protein import. This Oryza sativa subsp. japonica (Rice) protein is Lon protease homolog 2, peroxisomal.